Here is an 826-residue protein sequence, read N- to C-terminus: Leucine--tRNA ligase (826 aa).

The 'HIGH' region motif lies at 42-52 (PYPSGNLHMGH). The short motif at 581 to 585 (KMSKS) is the 'KMSKS' region element. Lys584 contributes to the ATP binding site.

Belongs to the class-I aminoacyl-tRNA synthetase family.

The protein resides in the cytoplasm. It catalyses the reaction tRNA(Leu) + L-leucine + ATP = L-leucyl-tRNA(Leu) + AMP + diphosphate. The sequence is that of Leucine--tRNA ligase from Desulforudis audaxviator (strain MP104C).